The primary structure comprises 463 residues: MELKQDQIVNFLKNYGFVYQSSEIYNGLANSWDYGPLGALLKNNIKQLLLKHFVFSQPDMKLLDSSIILNPLVWQASGHLDNFSDPLVDCKKCKSRYRADKLIEELNDDSIKITENTDPSYLEQILVDKKVECKKCESTNWTKIRKFNLMFKTFQGVVEDSLNTIYLRPETAQGIFINFKNIVRTQRMKLPFGVAQIGKAFRNEITPGNFIFRTREFEQFEIEYFLEPELVKEKFDWYINQIEDFLINKLLINKQLIKRHEIAKDELAHYSSRTIDFQFNFPHGWSELWGLAHRGNFDLTAHSNESGKTLDYHNEIEKTKIIPDVIEPSLGIERILYAIFCAHYHVEQLADNDSREVLRLPVSLSPYQLAILPLVNKLKDQAYQLYLDLLKISDANLRFDFDSAGSIGKRYRRYDAIGAKYCLTYDFDSLEKGIVTIRERDSMEQIKIPISELRQWIRNNLHE.

Substrate is bound by residues Arg98 and Glu170. Residues 202-204, 212-217, 287-288, and 331-334 each bind ATP; these read RNE, FRTREF, EL, and GIER. 217–221 contacts substrate; that stretch reads FEQFE. 327–331 serves as a coordination point for substrate; the sequence is EPSLG.

Belongs to the class-II aminoacyl-tRNA synthetase family. As to quaternary structure, homodimer.

The protein resides in the cytoplasm. The catalysed reaction is tRNA(Gly) + glycine + ATP = glycyl-tRNA(Gly) + AMP + diphosphate. In terms of biological role, catalyzes the attachment of glycine to tRNA(Gly). The chain is Glycine--tRNA ligase from Mycoplasmoides gallisepticum (strain R(low / passage 15 / clone 2)) (Mycoplasma gallisepticum).